The following is a 350-amino-acid chain: MRFLAGGASASVAAVGAGTVADLWEVKRRGTAMGYFFLGPMLGPLVSPIIGGILTQRFGWRSTQWGAVVYGGLVWLSMIFLLPETSSKAVKGKEPAVAENSDDGNVQPVPESCVSRFFKALGRMLVEPFRLVGYLRSPPLFMTCYYASISFACYYILNLAIQRTFSRDPYSFRAIILGLLYIPSALGSIVASVVGGRWTDYVMRREAKAAGRFDESGNPKFRPSDRMCENAWIPAFVFPAALLVFGWTTHEGIFWFAPIVVTFFFGLGNSLIFNTATTMLTEILPGKASNAVALNNLMRNTLSCAAAVATDPLLGAIGTQWLFTGLAVICWASSGVIWALKRHSDKAPSA.

8 helical membrane-spanning segments follow: residues 3–23, 34–54, 65–85, 141–161, 174–194, 227–247, 253–273, and 312–332; these read FLAGGASASVAAVGAGTVADL, GYFFLGPMLGPLVSPIIGGIL, WGAVVYGGLVWLSMIFLLPET, FMTCYYASISFACYYILNLAI, AIILGLLYIPSALGSIVASVV, MCENAWIPAFVFPAALLVFGW, IFWFAPIVVTFFFGLGNSLIF, and PLLGAIGTQWLFTGLAVICWA.

The protein belongs to the major facilitator superfamily.

Its subcellular location is the cell membrane. In terms of biological role, MFS transporter; part of the gene cluster that mediates the biosynthesis of the bibenzoquinone oosporein, a metabolite required for fungal virulence that acts by evading host immunity to facilitate fungal multiplication in insects. The function of this putative MFS transporter remains unclear since its deletion leads to increased oosporein production. This chain is MFS transporter OpS2, found in Beauveria bassiana (strain ARSEF 2860) (White muscardine disease fungus).